Consider the following 398-residue polypeptide: Large ribosomal subunit protein uL3 (398 aa).

Over residues 1-10 (MSHRKFEAPR) the composition is skewed to basic and acidic residues. A disordered region spans residues 1 to 34 (MSHRKFEAPRHGNLGFRPRKRAARHQGKVKSFPK). Residues 17–28 (RPRKRAARHQGK) are compositionally biased toward basic residues.

Belongs to the universal ribosomal protein uL3 family.

It is found in the cytoplasm. Functionally, the L3 protein is a component of the large subunit of cytoplasmic ribosomes. This chain is Large ribosomal subunit protein uL3 (rpl3), found in Dictyostelium discoideum (Social amoeba).